We begin with the raw amino-acid sequence, 1083 residues long: Rho GTPase-activating protein 39 (1083 aa).

Residue S2 is modified to N-acetylserine. 2 consecutive WW domains span residues 25-58 and 63-97; these read NTRL…PPAG and RTSE…RPQG. The segment at 110–154 is disordered; the sequence is KQNTESPRASAESSPGRGSSVSREGSTSSSLEPEPDTEKAQELPA. The span at 117–141 shows a compositional bias: low complexity; the sequence is RASAESSPGRGSSVSREGSTSSSLE. At S169 the chain carries Phosphoserine. The segment at 226–369 is disordered; the sequence is AAQGNGYAPD…NKQGPPSPCQ (144 aa). Over residues 245–256 the composition is skewed to polar residues; the sequence is PSGSQHSPSLQT. The span at 268 to 280 shows a compositional bias: basic and acidic residues; it reads PERRPSPFLKRAE. Phosphoserine is present on residues S286, S384, S388, S406, and S407. 2 disordered regions span residues 405-545 and 570-599; these read GSSP…EAEG and MKQR…PGPV. Polar residues-rich tracts occupy residues 474–488 and 573–582; these read SWSS…TGYS and RSSWDSQQDG. Residues S604, S690, S715, and S726 each carry the phosphoserine modification. One can recognise a MyTH4 domain in the interval 722–879; it reads WSSESIKKPM…PNVEEIRHAK (158 aa). Residues 890 to 1078 enclose the Rho-GAP domain; it reads SALQEVMGMQ…VLIQHLDTSF (189 aa).

It is found in the nucleus. The polypeptide is Rho GTPase-activating protein 39 (ARHGAP39) (Homo sapiens (Human)).